We begin with the raw amino-acid sequence, 981 residues long: Colossin-C (981 aa).

The first 23 residues, 1–23, serve as a signal peptide directing secretion; it reads MKILYSLLLISSIILNTVLNISS. Residue N63 is glycosylated (N-linked (GlcNAc...) asparagine). The interval 172-195 is disordered; the sequence is EQTQPPTQPPTQPPTQPPTPPPFT. The segment covering 177 to 194 has biased composition (pro residues); the sequence is PTQPPTQPPTQPPTPPPF. N222, N591, and N811 each carry an N-linked (GlcNAc...) asparagine glycan.

This sequence belongs to the serine-aspartate repeat-containing protein (SDr) family.

The protein localises to the secreted. This is Colossin-C (colC) from Dictyostelium discoideum (Social amoeba).